A 334-amino-acid chain; its full sequence is Galactosylgalactosylxylosylprotein 3-beta-glucuronosyltransferase 1 (334 aa).

At 1 to 6 (MPKRRD) the chain is on the cytoplasmic side. An essential for transport from endoplasmic reticulum to Golgi apparatus and interaction with SAR1A region spans residues 3–5 (KRR). Residues 7–27 (ILAIVLIVLPWTLLITVWHQS) form a helical; Signal-anchor for type II membrane protein membrane-spanning segment. The Lumenal segment spans residues 28 to 334 (TLAPLLAVHK…KGFTDPSVEI (307 aa)). Residues 37-56 (KDEGSDPRRETPPGADPREY) are disordered. Position 91-93 (91-93 (PTY)) interacts with UDP-alpha-D-glucuronate. Residues T103 and T108 each carry the phosphothreonine modification. D122 is a binding site for UDP-alpha-D-glucuronate. A glycan (N-linked (GlcNAc...) asparagine) is linked at N140. Residues R165 and R170 each contribute to the UDP-alpha-D-glucuronate site. An N-linked (GlcNAc...) asparagine glycan is attached at N184. 195–197 (DDD) is a binding site for UDP-alpha-D-glucuronate. D197 is a Mn(2+) binding site. Residues 245–254 (FDPHRPFAID) are interaction with galactose moiety of substrate glycoprotein. The Proton donor/acceptor role is filled by E284. N303 carries N-linked (GlcNAc...) asparagine glycosylation. 311 to 313 (HTR) is a UDP-alpha-D-glucuronate binding site.

Belongs to the glycosyltransferase 43 family. As to quaternary structure, homodimer. Interacts with SAR1A. Mn(2+) is required as a cofactor. The soluble form derives from the membrane form by proteolytic processing. As to expression, mainly expressed in the brain.

It is found in the golgi apparatus membrane. Its subcellular location is the secreted. The protein resides in the endoplasmic reticulum membrane. It carries out the reaction 3-O-(beta-D-galactosyl-(1-&gt;3)-beta-D-galactosyl-(1-&gt;4)-beta-D-xylosyl)-L-seryl-[protein] + UDP-alpha-D-glucuronate = 3-O-(beta-D-GlcA-(1-&gt;3)-beta-D-Gal-(1-&gt;3)-beta-D-Gal-(1-&gt;4)-beta-D-Xyl)-L-seryl-[protein] + UDP + H(+). Its pathway is protein modification; protein glycosylation. Functionally, involved in the biosynthesis of L2/HNK-1 carbohydrate epitope on glycoproteins. Can also play a role in glycosaminoglycan biosynthesis. Substrates include asialo-orosomucoid (ASOR), asialo-fetuin, and asialo-neural cell adhesion molecule. Requires sphingomyelin for activity: stearoyl-sphingomyelin was the most effective, followed by palmitoyl-sphingomyelin and lignoceroyl-sphingomyelin. Activity was demonstrated only for sphingomyelin with a saturated fatty acid and not for that with an unsaturated fatty acid, regardless of the length of the acyl group. This is Galactosylgalactosylxylosylprotein 3-beta-glucuronosyltransferase 1 from Homo sapiens (Human).